Here is a 378-residue protein sequence, read N- to C-terminus: Chaperone protein DnaJ (378 aa).

A J domain is found at 5 to 69 (DYYEVLGVSK…NKRANYDQFG (65 aa)). Residues 135-217 (GSEKEISIRK…CHGKGTENKN (83 aa)) form a CR-type zinc finger. Zn(2+) contacts are provided by Cys148, Cys151, Cys165, Cys168, Cys191, Cys194, Cys205, and Cys208. CXXCXGXG motif repeat units lie at residues 148–155 (CHTCDGEG), 165–172 (CHYCNGSG), 191–198 (CPVCSGSG), and 205–212 (CPTCHGKG).

It belongs to the DnaJ family. As to quaternary structure, homodimer. Zn(2+) serves as cofactor.

The protein localises to the cytoplasm. Functionally, participates actively in the response to hyperosmotic and heat shock by preventing the aggregation of stress-denatured proteins and by disaggregating proteins, also in an autonomous, DnaK-independent fashion. Unfolded proteins bind initially to DnaJ; upon interaction with the DnaJ-bound protein, DnaK hydrolyzes its bound ATP, resulting in the formation of a stable complex. GrpE releases ADP from DnaK; ATP binding to DnaK triggers the release of the substrate protein, thus completing the reaction cycle. Several rounds of ATP-dependent interactions between DnaJ, DnaK and GrpE are required for fully efficient folding. Also involved, together with DnaK and GrpE, in the DNA replication of plasmids through activation of initiation proteins. In Staphylococcus saprophyticus subsp. saprophyticus (strain ATCC 15305 / DSM 20229 / NCIMB 8711 / NCTC 7292 / S-41), this protein is Chaperone protein DnaJ.